Consider the following 216-residue polypeptide: N-(5'-phosphoribosyl)anthranilate isomerase (216 aa).

It belongs to the TrpF family.

The enzyme catalyses N-(5-phospho-beta-D-ribosyl)anthranilate = 1-(2-carboxyphenylamino)-1-deoxy-D-ribulose 5-phosphate. It participates in amino-acid biosynthesis; L-tryptophan biosynthesis; L-tryptophan from chorismate: step 3/5. The polypeptide is N-(5'-phosphoribosyl)anthranilate isomerase (Leptospira borgpetersenii serovar Hardjo-bovis (strain JB197)).